Reading from the N-terminus, the 246-residue chain is Transmembrane protein 41 homolog (246 aa).

A run of 6 helical transmembrane segments spans residues 12-32 (WLVL…YSNF), 68-88 (SVVL…AIPG), 101-123 (PFYV…CYTI), 159-179 (IFLR…SPVL), 182-202 (PLAP…FLYI), and 219-239 (SWSS…PILL).

The protein belongs to the TMEM41 family.

The protein resides in the membrane. This Caenorhabditis elegans protein is Transmembrane protein 41 homolog (tag-175).